The following is a 112-amino-acid chain: MHETIRVKIITPSSIAFEKQSKMVTMPGEDGMFGVLPHHVPMIVNLKAGLVQIYIYNIHNYENTYLISGGVTEITSHYINIVTEVAINVTNLSESEISTQRYELQKLLSHQH.

This sequence belongs to the ATPase epsilon chain family. F-type ATPases have 2 components, CF(1) - the catalytic core - and CF(0) - the membrane proton channel. CF(1) has five subunits: alpha(3), beta(3), gamma(1), delta(1), epsilon(1). CF(0) has three main subunits: a, b and c.

The protein localises to the cell inner membrane. Functionally, produces ATP from ADP in the presence of a proton gradient across the membrane. This chain is ATP synthase epsilon chain (atpC), found in Rickettsia prowazekii (strain Madrid E).